A 56-amino-acid polypeptide reads, in one-letter code: Protein YqiD (56 aa).

Residues 2-22 (FIAWYWIVLIALVVVGYFLHL) form a helical membrane-spanning segment.

It localises to the cell inner membrane. The chain is Protein YqiD from Escherichia coli (strain K12).